A 434-amino-acid polypeptide reads, in one-letter code: Adenylosuccinate synthetase (434 aa).

Residues glycine 22–lysine 28 and glycine 50–threonine 52 each bind GTP. Aspartate 23 acts as the Proton acceptor in catalysis. 2 residues coordinate Mg(2+): aspartate 23 and glycine 50. Residues aspartate 23–lysine 26, asparagine 48–histidine 51, threonine 139, arginine 153, glutamine 234, threonine 249, and arginine 313 each bind IMP. Histidine 51 acts as the Proton donor in catalysis. Alanine 309 to arginine 315 contacts substrate. Residues arginine 315, lysine 341–aspartate 343, and serine 423–glycine 425 each bind GTP.

The protein belongs to the adenylosuccinate synthetase family. In terms of assembly, homodimer. Requires Mg(2+) as cofactor.

It localises to the cytoplasm. It carries out the reaction IMP + L-aspartate + GTP = N(6)-(1,2-dicarboxyethyl)-AMP + GDP + phosphate + 2 H(+). Its pathway is purine metabolism; AMP biosynthesis via de novo pathway; AMP from IMP: step 1/2. Its function is as follows. Plays an important role in the de novo pathway of purine nucleotide biosynthesis. Catalyzes the first committed step in the biosynthesis of AMP from IMP. The chain is Adenylosuccinate synthetase from Chlorobium chlorochromatii (strain CaD3).